We begin with the raw amino-acid sequence, 261 residues long: 5'-nucleotidase SurE (261 aa).

Residues D8, D9, S39, and N91 each coordinate a divalent metal cation.

This sequence belongs to the SurE nucleotidase family. It depends on a divalent metal cation as a cofactor.

The protein localises to the cytoplasm. The enzyme catalyses a ribonucleoside 5'-phosphate + H2O = a ribonucleoside + phosphate. Its function is as follows. Nucleotidase that shows phosphatase activity on nucleoside 5'-monophosphates. The polypeptide is 5'-nucleotidase SurE (Polaromonas naphthalenivorans (strain CJ2)).